The primary structure comprises 143 residues: Small ribosomal subunit protein bS6 (143 aa).

Positions 100 to 143 (SPIIKMKDERREVVELTTSGSEDNQKDHHKEDLDKKTDEFSEEN) are disordered. 2 stretches are compositionally biased toward basic and acidic residues: residues 104–113 (KMKDERREVV) and 122–143 (DNQK…SEEN).

This sequence belongs to the bacterial ribosomal protein bS6 family.

Its function is as follows. Binds together with bS18 to 16S ribosomal RNA. The chain is Small ribosomal subunit protein bS6 from Hamiltonella defensa subsp. Acyrthosiphon pisum (strain 5AT).